A 315-amino-acid polypeptide reads, in one-letter code: Aspartate carbamoyltransferase catalytic subunit (315 aa).

Residues R65 and T66 each coordinate carbamoyl phosphate. K93 provides a ligand contact to L-aspartate. Carbamoyl phosphate is bound by residues R115, H145, and Q148. The L-aspartate site is built by R179 and R234. Positions 275 and 276 each coordinate carbamoyl phosphate.

Belongs to the aspartate/ornithine carbamoyltransferase superfamily. ATCase family. As to quaternary structure, heterododecamer (2C3:3R2) of six catalytic PyrB chains organized as two trimers (C3), and six regulatory PyrI chains organized as three dimers (R2).

The enzyme catalyses carbamoyl phosphate + L-aspartate = N-carbamoyl-L-aspartate + phosphate + H(+). The protein operates within pyrimidine metabolism; UMP biosynthesis via de novo pathway; (S)-dihydroorotate from bicarbonate: step 2/3. Its function is as follows. Catalyzes the condensation of carbamoyl phosphate and aspartate to form carbamoyl aspartate and inorganic phosphate, the committed step in the de novo pyrimidine nucleotide biosynthesis pathway. This is Aspartate carbamoyltransferase catalytic subunit from Xanthomonas oryzae pv. oryzae (strain MAFF 311018).